The sequence spans 233 residues: MDDNLYRQRAAEHALRHVESGMTIGLGTGSTATFMLYGLAARLADGRLQRVTGVPTSEVTAALARELGIPLTTLDRQPHLDLALDGADEIDPQLRLIKGLGGAMLREKIVAASAARFVVMAAVSKCVERLGERSPLPVEVVAFGLPLCARRLKALGGAPALRRDRSGAPFVTDEGNLILDCNFGIIADPEALAASICAIPGVVAHGLFLGMASLAVIAGPDGIVELHAPSARQ.

Substrate contacts are provided by residues 28 to 31 (TGST), 85 to 88 (DGAD), and 98 to 101 (KGLG). Glu-107 acts as the Proton acceptor in catalysis. Lys-125 is a substrate binding site.

This sequence belongs to the ribose 5-phosphate isomerase family. In terms of assembly, homodimer.

The catalysed reaction is aldehydo-D-ribose 5-phosphate = D-ribulose 5-phosphate. The protein operates within carbohydrate degradation; pentose phosphate pathway; D-ribose 5-phosphate from D-ribulose 5-phosphate (non-oxidative stage): step 1/1. Catalyzes the reversible conversion of ribose-5-phosphate to ribulose 5-phosphate. The protein is Ribose-5-phosphate isomerase A of Roseiflexus sp. (strain RS-1).